Reading from the N-terminus, the 633-residue chain is Guanylate-binding protein 6 (633 aa).

The GTPase domain (Globular) stretch occupies residues 1–310 (MESGPKMLAP…EAVNSGAVPC (310 aa)). The region spanning 35-277 (SQPVVVVAIV…FSSYIFTHAR (243 aa)) is the GB1/RHD3-type G domain. GTP contacts are provided by residues 45 to 52 (GLYRTGKS), 67 to 69 (LGS), and 97 to 101 (DTEGL).

This sequence belongs to the TRAFAC class dynamin-like GTPase superfamily. GB1/RHD3 GTPase family. GB1 subfamily.

The protein localises to the cytoplasmic vesicle. It catalyses the reaction GTP + H2O = GDP + phosphate + H(+). In terms of biological role, interferon (IFN)-inducible GTPase that plays important roles in innate immunity against a diverse range of bacterial, viral and protozoan pathogens, such as bacterial pathogens Listeria monocytogenes and Mycobacterium bovis BCG as well as the protozoan pathogen Toxoplasma gondii. Confers protection to several pathogens, including the bacterial pathogens Listeria monocytogenes and Mycobacterium bovis BCG as well as the protozoan pathogen Toxoplasma gondii. This chain is Guanylate-binding protein 6 (GBP6), found in Pongo abelii (Sumatran orangutan).